Here is a 209-residue protein sequence, read N- to C-terminus: Uracil phosphoribosyltransferase (209 aa).

5-phospho-alpha-D-ribose 1-diphosphate is bound by residues R79, R104, and 131 to 139 (DPMLATGGS). Uracil-binding positions include I194 and 199–201 (GDA). Position 200 (D200) interacts with 5-phospho-alpha-D-ribose 1-diphosphate.

The protein belongs to the UPRTase family. The cofactor is Mg(2+).

It carries out the reaction UMP + diphosphate = 5-phospho-alpha-D-ribose 1-diphosphate + uracil. Its pathway is pyrimidine metabolism; UMP biosynthesis via salvage pathway; UMP from uracil: step 1/1. Its activity is regulated as follows. Allosterically activated by GTP. Its function is as follows. Catalyzes the conversion of uracil and 5-phospho-alpha-D-ribose 1-diphosphate (PRPP) to UMP and diphosphate. The chain is Uracil phosphoribosyltransferase from Lacticaseibacillus paracasei (strain ATCC 334 / BCRC 17002 / CCUG 31169 / CIP 107868 / KCTC 3260 / NRRL B-441) (Lactobacillus paracasei).